The following is an 883-amino-acid chain: Alanine--tRNA ligase (883 aa).

Zn(2+)-binding residues include His-563, His-567, Cys-677, and His-681.

Belongs to the class-II aminoacyl-tRNA synthetase family. Zn(2+) serves as cofactor.

It localises to the cytoplasm. It catalyses the reaction tRNA(Ala) + L-alanine + ATP = L-alanyl-tRNA(Ala) + AMP + diphosphate. In terms of biological role, catalyzes the attachment of alanine to tRNA(Ala) in a two-step reaction: alanine is first activated by ATP to form Ala-AMP and then transferred to the acceptor end of tRNA(Ala). Also edits incorrectly charged Ser-tRNA(Ala) and Gly-tRNA(Ala) via its editing domain. The chain is Alanine--tRNA ligase from Cereibacter sphaeroides (strain ATCC 17025 / ATH 2.4.3) (Rhodobacter sphaeroides).